Reading from the N-terminus, the 359-residue chain is MDNQKGALFPDEVILQILARLPVKSLFRFKSVCKSWYRLPSDKYFTSLFNQLSVKEQLLVAEVSDSSSLICVDNLRGVSELSLDFVRDRVRIRVSSNGLLCCSSIPEKGVYYVCNPSTREYRKLPKSRERPVTRFYPDGEATLVGLACDLSKNKFNVVLAGYHRSFGQRPDGSFICLVFDSESNKWRKFVSVLEECSFTHMSKNQVVFVNGMLHWLMSGLCYILALDVEHDVWRKISLPDEIRIGNGGGNRVYLLESDGFLSVIQLSDVWMKIWKMSEYETETWSVVDSISLRCIKGLVPGIFPICQTGEYVFLATHKQVLVYQRRSKLWKEMFSVKGSSSLPLWFSAHAFRSTIVPCN.

An F-box domain is found at 3-52; sequence NQKGALFPDEVILQILARLPVKSLFRFKSVCKSWYRLPSDKYFTSLFNQL.

In terms of assembly, part of a SCF (SKP1-cullin-F-box) protein ligase complex. Interacts with SKP1A, SKP1B, ASK11, ASK12, ASK13 and ASK14.

The protein operates within protein modification; protein ubiquitination. The protein is F-box protein At5g49610 of Arabidopsis thaliana (Mouse-ear cress).